The sequence spans 506 residues: MIKSILLCFFFLFPLLLTLFKKLLPSKWKLPPGPTGLPIIGNLHQLGRLLHSSFHKLSLEHGPVMLLRFGVVPMVVISSKEAAKQVLKSRDLETCSRPKLVANGLFTRNFKDIAFAQYGEDWREMKKLVGLELFNPKKHKFFRYIREEEGDLLVKKLSKSSQTQTLVDLRKAFFSFTAGIIFRVSFGQNFRECDFIDMDRLEELVQESETNVFSFAFTDFFPTGLGWLVDRISGQHSRIEKAFSKLTKFFQHVIDEELKIGQSQDHSNLVSSMLDMINRSTEYGSFKITSDHLIAMMTDIVLGGVNAGTITMIWTMTELTRHPRVMKKLREEIRATLGPNKERITEEDLEKVEYLKLVIKETFRLHPPGPFLLPRQVMSDIEIQGYHIPKNAHIKISTYAIGRDPKCWTNPEEFNPERFANTSINYKGQHYELLPFGAGRRSCPGMTLGITILELGLLNILYYFDWSLPNGMTIKDIDMEEDGALTIAKKVPLELIPTLPASLCIK.

The chain crosses the membrane as a helical span at residues 5 to 25; it reads ILLCFFFLFPLLLTLFKKLLP. Residue cysteine 443 coordinates heme.

The protein belongs to the cytochrome P450 family. Requires heme as cofactor.

The protein localises to the membrane. This is Cytochrome P450 71B8 (CYP71B8) from Arabidopsis thaliana (Mouse-ear cress).